A 160-amino-acid chain; its full sequence is Protein-export protein SecB (160 aa).

Belongs to the SecB family. As to quaternary structure, homotetramer, a dimer of dimers. One homotetramer interacts with 1 SecA dimer.

It localises to the cytoplasm. In terms of biological role, one of the proteins required for the normal export of preproteins out of the cell cytoplasm. It is a molecular chaperone that binds to a subset of precursor proteins, maintaining them in a translocation-competent state. It also specifically binds to its receptor SecA. The chain is Protein-export protein SecB from Burkholderia multivorans (strain ATCC 17616 / 249).